The following is a 987-amino-acid chain: Leucine--tRNA ligase (987 aa).

The 'HIGH' region motif lies at 69–80 (PYPSGKGLHVGH). Positions 760–764 (KMGKS) match the 'KMSKS' region motif. Lys763 serves as a coordination point for ATP.

This sequence belongs to the class-I aminoacyl-tRNA synthetase family.

The protein resides in the cytoplasm. It carries out the reaction tRNA(Leu) + L-leucine + ATP = L-leucyl-tRNA(Leu) + AMP + diphosphate. In Bifidobacterium longum (strain NCC 2705), this protein is Leucine--tRNA ligase.